Here is a 261-residue protein sequence, read N- to C-terminus: Putative methyltransferase MJ0046 (261 aa).

The protein belongs to the methyltransferase superfamily.

This is Putative methyltransferase MJ0046 from Methanocaldococcus jannaschii (strain ATCC 43067 / DSM 2661 / JAL-1 / JCM 10045 / NBRC 100440) (Methanococcus jannaschii).